Consider the following 530-residue polypeptide: UDP-glucuronosyltransferase 1A9 (530 aa).

A signal peptide spans 1 to 25 (MACTGWTSPLPLCVCLLLTCGFAEA). N-linked (GlcNAc...) asparagine glycosylation is present at Asn-71. The residue at position 99 (Lys-99) is an N6-succinyllysine. N-linked (GlcNAc...) asparagine glycosylation is found at Asn-292 and Asn-344. A helical membrane pass occupies residues 488–504 (VIGFLLAVVLTVAFITF).

This sequence belongs to the UDP-glycosyltransferase family. Homodimer. Homooligomer. Interacts with UGT1A1, UGT1A3, UGT1A4, UGT1A6, UGT1A7, UGT1A8 and UGT1A10 to form heterodimers. Isoform 1 interacts with isoform 2/i2 suggesting that oligomerization is involved in negative regulation of transferase activity by isoform 2. Isoform 1 also interacts with respective i2 isoforms of UGT1A1, UGT1A3, UGT1A4, UGT1A6, UGT1A7, UGT1A8 and UGT1A10. As to expression, expressed in liver, kidney, colon, esophagus and small intestine.

Its subcellular location is the endoplasmic reticulum membrane. It catalyses the reaction glucuronate acceptor + UDP-alpha-D-glucuronate = acceptor beta-D-glucuronoside + UDP + H(+). The catalysed reaction is 2-hydroxy-17beta-estradiol + UDP-alpha-D-glucuronate = 2-hydroxy-17beta-estradiol 3-O-(beta-D-glucuronate) + UDP + H(+). It carries out the reaction 4-hydroxy-17beta-estradiol + UDP-alpha-D-glucuronate = 17beta-estradiol 4-O-(beta-D-glucuronate) + UDP + H(+). The enzyme catalyses 2-hydroxyestrone + UDP-alpha-D-glucuronate = 2-hydroxyestrone 3-O-(beta-D-glucuronate) + UDP + H(+). It catalyses the reaction 4-hydroxyestrone + UDP-alpha-D-glucuronate = estrone 4-O-(beta-D-glucuronate) + UDP + H(+). The catalysed reaction is prunetin + UDP-alpha-D-glucuronate = prunetin-5-O-beta-D-glucuronide + UDP. It carries out the reaction 8-iso-prostaglandin F2alpha + UDP-alpha-D-glucuronate = 8-iso-prostaglandin F2alpha-glucuronide + UDP + H(+). The enzyme catalyses 5-epi-5-F2t-IsoP + UDP-alpha-D-glucuronate = 5-epi-5-F2t-IsoP-glucuronide + UDP + H(+). It catalyses the reaction (5Z,8Z,11Z,14Z)-eicosatetraenoate + UDP-alpha-D-glucuronate = O-[(5Z),(8Z),(11Z),(14Z)-eicosatetraenoyl]-beta-D-glucuronate + UDP. The catalysed reaction is 15-hydroxy-(5Z,8Z,11Z,13E)-eicosatetraenoate + UDP-alpha-D-glucuronate = 15-O-(beta-D-glucuronosyl)-(5Z,8Z,11Z,14Z)-eicosatetraenoate + UDP + H(+). It carries out the reaction prostaglandin B1 + UDP-alpha-D-glucuronate = 15-O-(beta-D-glucuronosyl)-prostaglandin B1 + UDP + H(+). The enzyme catalyses (E)-ferulate + UDP-alpha-D-glucuronate = (E)-4-O-(beta-D-glucuronosyl)-ferulate + UDP + H(+). It catalyses the reaction (E)-ferulate + UDP-alpha-D-glucuronate = (E)-ferulic acid beta-D-glucuronate ester + UDP. The catalysed reaction is candesartan + UDP-alpha-D-glucuronate = candesartan O-beta-D-glucuronoside + UDP. It carries out the reaction SN-38 + UDP-alpha-D-glucuronate = SN-38 O-beta-D-glucuronide + UDP + H(+). The enzyme catalyses mycophenolate + UDP-alpha-D-glucuronate = mycophenolate 7-O-beta-D-glucuronide + UDP + H(+). Its function is as follows. UDP-glucuronosyltransferase (UGT) that catalyzes phase II biotransformation reactions in which lipophilic substrates are conjugated with glucuronic acid to increase the metabolite's water solubility, thereby facilitating excretion into either the urine or bile. Essential for the elimination and detoxification of drugs, xenobiotics and endogenous compounds. Catalyzes the glucuronidation of endogenous estrogen hormones such as estradiol and estrone. Involved in the glucuronidation of arachidonic acid (AA) and AA-derived eicosanoids including 15-HETE, PGB1 and F2-isoprostanes (8-iso-PGF2alpha and 5-epi-5-F2t-IsoP). Glucuronates the phytochemical ferulic acid efficently at both the phenolic or the carboxylic acid group. Also catalyzes the glucuronidation of the isoflavones genistein, daidzein, glycitein, formononetin, biochanin A and prunetin, which are phytoestrogens with anticancer and cardiovascular properties. Involved in the glucuronidation of the AGTR1 angiotensin receptor antagonist caderastan, a drug which can inhibit the effect of angiotensin II. Involved in the biotransformation of 7-ethyl-10-hydroxycamptothecin (SN-38), the pharmacologically active metabolite of the anticancer drug irinotecan. Also metabolizes mycophenolate, an immunosuppressive agent. Lacks UGT glucuronidation activity but acts as a negative regulator of isoform 1. The protein is UDP-glucuronosyltransferase 1A9 of Homo sapiens (Human).